Reading from the N-terminus, the 671-residue chain is DNA ligase (671 aa).

Residues D32–D36, S81–L82, and E113 contribute to the NAD(+) site. Catalysis depends on K115, which acts as the N6-AMP-lysine intermediate. Positions 136, 173, 290, and 314 each coordinate NAD(+). Positions 408, 411, 426, and 432 each coordinate Zn(2+). The BRCT domain maps to E593–A671.

Belongs to the NAD-dependent DNA ligase family. LigA subfamily. Requires Mg(2+) as cofactor. It depends on Mn(2+) as a cofactor.

The catalysed reaction is NAD(+) + (deoxyribonucleotide)n-3'-hydroxyl + 5'-phospho-(deoxyribonucleotide)m = (deoxyribonucleotide)n+m + AMP + beta-nicotinamide D-nucleotide.. In terms of biological role, DNA ligase that catalyzes the formation of phosphodiester linkages between 5'-phosphoryl and 3'-hydroxyl groups in double-stranded DNA using NAD as a coenzyme and as the energy source for the reaction. It is essential for DNA replication and repair of damaged DNA. The chain is DNA ligase from Salmonella typhi.